The sequence spans 194 residues: Ribonuclease HII (194 aa).

An RNase H type-2 domain is found at 3 to 193 (ILTAGVDEAG…VRNLLAQQAL (191 aa)). Positions 9, 10, and 101 each coordinate a divalent metal cation.

It belongs to the RNase HII family. Mn(2+) is required as a cofactor. The cofactor is Mg(2+).

The protein localises to the cytoplasm. The catalysed reaction is Endonucleolytic cleavage to 5'-phosphomonoester.. Functionally, endonuclease that specifically degrades the RNA of RNA-DNA hybrids. This chain is Ribonuclease HII (rnhB), found in Neisseria meningitidis serogroup B (strain ATCC BAA-335 / MC58).